We begin with the raw amino-acid sequence, 471 residues long: MLLPVIMAGGTGSRLWPMSRELYPKQFLRLFGQNSMLQETITRLSGLEIHEPMVICNEEHRFLVAEQLRQLNKLSNNIILEPVGRNTAPAIALAALQATRHGDDPLMLVLAADHIINNQPVFHDAIRVAEQYADEGHLVTFGIVPNAPETGYGYIQRGVALTDSAHTPYQVARFVEKPDRERAEAYLASGEYYWNSGMFMFRAKKYLSELAKFRPDILEACQAAVNAADNGSDFISIPHDIFCECPDESVDYAVMEKTADAVVVGLDADWSDVGSWSALWEVSPKDEQGNVLSGDAWVHNSENCYINSDEKLVAAIGVENLVIVSTKDAVLVMNRERSQDVKKAVEFLKQNQRSEYKRHREIYRPWGRCDVVVQTPRFNVNRITVKPGGAFSMQMHHHRAEHWVILAGTGQVTVNGKQFLLTENQSTFIPIGAEHSLENPGRIPLEVLEIQSGSYLGEDDIIRIKDQYGRC.

The protein belongs to the mannose-6-phosphate isomerase type 2 family.

It catalyses the reaction alpha-D-mannose 1-phosphate + GTP + H(+) = GDP-alpha-D-mannose + diphosphate. Its pathway is nucleotide-sugar biosynthesis; GDP-alpha-D-mannose biosynthesis; GDP-alpha-D-mannose from alpha-D-mannose 1-phosphate (GTP route): step 1/1. Involved in the biosynthesis of the K2 capsular polysaccharide biosynthesis. The polypeptide is Mannose-1-phosphate guanylyltransferase (manC) (Klebsiella pneumoniae).